The primary structure comprises 235 residues: Triosephosphate isomerase (235 aa).

7 to 9 (NFK) serves as a coordination point for substrate. The Electrophile role is filled by histidine 92. Glutamate 161 (proton acceptor) is an active-site residue. Residues glycine 167 and serine 197 each coordinate substrate.

Belongs to the triosephosphate isomerase family. Homodimer.

The protein localises to the cytoplasm. It catalyses the reaction D-glyceraldehyde 3-phosphate = dihydroxyacetone phosphate. Its pathway is carbohydrate biosynthesis; gluconeogenesis. It participates in carbohydrate degradation; glycolysis; D-glyceraldehyde 3-phosphate from glycerone phosphate: step 1/1. Functionally, involved in the gluconeogenesis. Catalyzes stereospecifically the conversion of dihydroxyacetone phosphate (DHAP) to D-glyceraldehyde-3-phosphate (G3P). This Helicobacter hepaticus (strain ATCC 51449 / 3B1) protein is Triosephosphate isomerase.